The following is an 89-amino-acid chain: Small ribosomal subunit protein uS15 (89 aa).

The protein belongs to the universal ribosomal protein uS15 family. As to quaternary structure, part of the 30S ribosomal subunit. Forms a bridge to the 50S subunit in the 70S ribosome, contacting the 23S rRNA.

In terms of biological role, one of the primary rRNA binding proteins, it binds directly to 16S rRNA where it helps nucleate assembly of the platform of the 30S subunit by binding and bridging several RNA helices of the 16S rRNA. Its function is as follows. Forms an intersubunit bridge (bridge B4) with the 23S rRNA of the 50S subunit in the ribosome. The protein is Small ribosomal subunit protein uS15 of Lactobacillus helveticus (strain DPC 4571).